Reading from the N-terminus, the 726-residue chain is Uracil catabolism protein 2 (726 aa).

Residues 24–53 constitute a DNA-binding region (zn(2)-C6 fungal-type); it reads CGVCRKFKTRCDFEPLVGKCHRCNVLRLEC. Disordered stretches follow at residues 152 to 183 and 629 to 681; these read AGMG…FVNG and SGRL…SGAD. Residues 161-170 are compositionally biased toward acidic residues; sequence YDDDDDGDDD. Over residues 640–679 the composition is skewed to polar residues; it reads RGSPSMTPGFQQSVQSSSALQGSKAGSPQSARSVNSQGSG.

This sequence belongs to the URC2 family.

It localises to the nucleus. Probable transcriptional activator involved in uracil catabolism. The protein is Uracil catabolism protein 2 (URC2) of Lachancea kluyveri (Yeast).